The chain runs to 143 residues: MTEITNLQDKVDVDETLLNIITQAVSLTLNEEGRAGVVSIALVDNNYIQSLNREYRQKDVPTDVLSFPLADDKDDEVLGDVVISLEKAAEQAKEYGHSFFREVAFLTVHGVLHLLGHDHYEEEETRIMREKEEKILSALGLER.

H109, H113, and H119 together coordinate Zn(2+).

This sequence belongs to the endoribonuclease YbeY family. Requires Zn(2+) as cofactor.

The protein resides in the cytoplasm. Single strand-specific metallo-endoribonuclease involved in late-stage 70S ribosome quality control and in maturation of the 3' terminus of the 16S rRNA. This Carboxydothermus hydrogenoformans (strain ATCC BAA-161 / DSM 6008 / Z-2901) protein is Endoribonuclease YbeY.